The sequence spans 676 residues: uncharacterized protein (676 aa).

This is an uncharacterized protein from Magallana gigas (Pacific oyster).